The following is a 79-amino-acid chain: Conotoxin Leo-O4 (79 aa).

Residues 1–22 (MKLTCMMLVAVLFLTAWTFVTA) form the signal peptide. Positions 23–51 (NVSRNGLENLFPEERHEMMNPNAAKLNNR) are excised as a propeptide. 3 disulfides stabilise this stretch: Cys-53/Cys-70, Cys-60/Cys-74, and Cys-69/Cys-78.

The protein belongs to the conotoxin O1 superfamily. Expressed by the venom duct.

The protein localises to the secreted. This is Conotoxin Leo-O4 from Conus leopardus (Leopard cone).